Reading from the N-terminus, the 231-residue chain is Beta-casein (231 aa).

Positions 1–15 (MKVFILACLVALALA) are cleaved as a signal peptide. Ser-24 is subject to Phosphoserine. At Thr-27 the chain carries Phosphothreonine. Phosphoserine occurs at positions 29, 31, and 32.

The protein belongs to the beta-casein family. In terms of tissue distribution, mammary gland specific. Secreted in milk.

It is found in the secreted. Its function is as follows. Important role in determination of the surface properties of the casein micelles. The chain is Beta-casein (Csn2) from Rattus norvegicus (Rat).